We begin with the raw amino-acid sequence, 160 residues long: MSTNSYYSSASSSGFRVCPPGVPSKCWCGEEIITFTSKTKENPYRRFYRCAIAMKRENEEHLFKWVDEALLDEIKMVNEKCKRVVENISDLRMNVMANMELLNKNAKQMEEELIKKMEGELLTMKENVEELGHVMAKSALKTVGVAVVIVASIVWLWGRV.

The Zn(2+) site is built by Cys-26, Cys-28, Cys-50, and His-61. The segment at 26-69 adopts a GRF-type; atypical zinc-finger fold; that stretch reads CWCGEEIITFTSKTKENPYRRFYRCAIAMKRENEEHLFKWVDEA.

This is an uncharacterized protein from Arabidopsis thaliana (Mouse-ear cress).